The chain runs to 126 residues: MAIVGIGTDIVEIGRIEAVVSRSGDRLARRILSPDEWRQYQQHNQLVRFLAKRFAVKEAASKALGTGIRDGLAFTQFEVCNDALGKPSLRLFDQAVVLANRLGVTGMHVTLADERHYACATVIFER.

Positions 9 and 58 each coordinate Mg(2+).

Belongs to the P-Pant transferase superfamily. AcpS family. It depends on Mg(2+) as a cofactor.

It localises to the cytoplasm. It carries out the reaction apo-[ACP] + CoA = holo-[ACP] + adenosine 3',5'-bisphosphate + H(+). Transfers the 4'-phosphopantetheine moiety from coenzyme A to a Ser of acyl-carrier-protein. This chain is Holo-[acyl-carrier-protein] synthase, found in Sodalis glossinidius (strain morsitans).